Consider the following 635-residue polypeptide: Extracellular metalloproteinase MEP (635 aa).

Positions methionine 1–alanine 19 are cleaved as a signal peptide. The propeptide occupies histidine 20–glutamate 244. N-linked (GlcNAc...) asparagine glycans are attached at residues asparagine 287, asparagine 302, and asparagine 336. Histidine 429 provides a ligand contact to Zn(2+). The active site involves glutamate 430. Position 433 (histidine 433) interacts with Zn(2+).

The protein belongs to the peptidase M36 family. Requires Zn(2+) as cofactor.

The protein resides in the secreted. Secreted metalloproteinase that allows assimilation of proteinaceous substrates. In Leptosphaeria maculans (strain JN3 / isolate v23.1.3 / race Av1-4-5-6-7-8) (Blackleg fungus), this protein is Extracellular metalloproteinase MEP (MEP).